The sequence spans 731 residues: Putative beta-galactosidase (731 aa).

Residues methionine 1–glycine 29 form the signal peptide. The Proton donor role is filled by glutamate 187. Catalysis depends on glutamate 257, which acts as the Nucleophile.

Belongs to the glycosyl hydrolase 35 family. Senescing flower petals.

It carries out the reaction Hydrolysis of terminal non-reducing beta-D-galactose residues in beta-D-galactosides.. The chain is Putative beta-galactosidase (CARSR12) from Dianthus caryophyllus (Carnation).